A 432-amino-acid chain; its full sequence is Gamma-glutamyl phosphate reductase (432 aa).

It belongs to the gamma-glutamyl phosphate reductase family.

It localises to the cytoplasm. The enzyme catalyses L-glutamate 5-semialdehyde + phosphate + NADP(+) = L-glutamyl 5-phosphate + NADPH + H(+). The protein operates within amino-acid biosynthesis; L-proline biosynthesis; L-glutamate 5-semialdehyde from L-glutamate: step 2/2. Catalyzes the NADPH-dependent reduction of L-glutamate 5-phosphate into L-glutamate 5-semialdehyde and phosphate. The product spontaneously undergoes cyclization to form 1-pyrroline-5-carboxylate. The polypeptide is Gamma-glutamyl phosphate reductase (Corynebacterium melassecola).